The chain runs to 715 residues: ATP-binding cassette sub-family B member 10, mitochondrial (715 aa).

The N-terminal 82 residues, 1–82 (MRAPSARALL…SSGARRCWVL (82 aa)), are a transit peptide targeting the mitochondrion. Over 83 to 133 (AGPRAAHPLFARLQGAAATGVRDLGNDSQRRPAATGRSEVWKLLGLVRPER) the chain is Mitochondrial matrix. The chain crosses the membrane as a helical span at residues 134–157 (GRLSAAVGFLAVSSVITMSAPFFL). The ABC transmembrane type-1 domain occupies 136–422 (LSAAVGFLAV…LSSFYSELMK (287 aa)). Residues 158 to 178 (GRIIDVIYTNPSEGYGDSLTR) are Mitochondrial intermembrane-facing. The helical transmembrane segment at 179–201 (LCAVLTCVFLCGAAANGIRVYLM) threads the bilayer. The Mitochondrial matrix portion of the chain corresponds to 202 to 252 (QSSGQSIVNRLRTSLFSSILRQEVAFFDKTRTGELINRLSSDTALLGRSVT). Position 230 is an N6-acetyllysine (lysine 230). The chain crosses the membrane as a helical span at residues 253–275 (ENLSDGLRAGAQASVGVGMMFFV). The Mitochondrial intermembrane segment spans residues 276-278 (SPS). A helical membrane pass occupies residues 279–298 (LATFVLSVVPPISVLAVIYG). Over 299-357 (RYLRKLSKATQDSLAEATQLAEERIGNIRTIRAFGKEMTEVEKYTGRVDQLLQLAQKEA) the chain is Mitochondrial matrix. The chain crosses the membrane as a helical span at residues 358–381 (LARAGFFGAAGLSGNLIVLSVLYK). The Mitochondrial intermembrane segment spans residues 382 to 395 (GGLLMGSAHMTVGE). Residues 396 to 417 (LSSFLMYAFWVGLSIGGLSSFY) form a helical membrane-spanning segment. Over 418 to 715 (SELMKGLGAG…AEQFLEPARA (298 aa)) the chain is Mitochondrial matrix. An ABC transporter domain is found at 457 to 696 (LEFRNVHFTY…PNGLYRKLMN (240 aa)). Residues glycine 495, glycine 497, lysine 498, serine 499, and threonine 500 each coordinate ATP. Residue serine 499 participates in Mg(2+) binding. An S-glutathionyl cysteine modification is found at cysteine 547. Aspartate 623 contacts Mg(2+).

The protein belongs to the ABC transporter superfamily. ABCB family. Mitochondrial peptide exporter (TC 3.A.1.212) subfamily. As to quaternary structure, homodimer or homooligomer. Interacts with PAAT; this interaction regulates ABCB10. Interacts with SLC25A37; this interaction stabilizes SLC25A37 and enhances the function of SLC25A37 to import mitochondrial iron during erythroid differentiation. Interacts with FECH; this interaction may allow the formation of the oligomeric complex with SLC25A37. Forms a complex with ABCB7 and FECH, where a dimeric FECH bridges ABCB7 and ABCB10 homodimers; this complex may be required for cellular iron homeostasis, mitochondrial function and heme biosynthesis. Expressed at particularly high levels in fetal liver, and erythroid tissues of embryos and adults. Found also in adult bone marrow, liver and kidney, and at lower levels in heart, brain and spleen.

Its subcellular location is the mitochondrion inner membrane. The enzyme catalyses biliverdin IXalpha(in) + ATP + H2O = biliverdin IXalpha(out) + ADP + phosphate + H(+). Its activity is regulated as follows. Oxidized glutathione (GSSG) stimulates ATP hydrolysis without affecting ATP binding, whereas reduced glutathione (GSH) inhibits ATP binding and hydrolysis. In terms of biological role, ATP-dependent transporter located in the mitochondrial inner membrane that catalyzes the export of biliverdin from the mitochondrial matrix, and plays a crucial role in hemoglobin synthesis and antioxidative stress. Participates in the early step of the heme biosynthetic process during insertion of iron into protoporphyrin IX (PPIX). Involved in the stabilization of the iron transporter mitoferrin-1/SLC25A37. In addition may be involved in mitochondrial unfolded protein response (UPRmt) signaling pathway, although ABCB10 probably does not participate in peptide export from mitochondria. This Mus musculus (Mouse) protein is ATP-binding cassette sub-family B member 10, mitochondrial.